A 619-amino-acid polypeptide reads, in one-letter code: MIIRLHFYYLLTLVYHLGLVGAYEKAARKRIQPPDLIPGPPGHKLGDERPPHYDHRPPYKKHIDNIPAYNLTDLIDDKLLNKYENSCTVNVLTGGFISLASNSWHLRAYNYTLNYPSFLIRCDNGSANPNFSHVLQDFVYDINNKFNVQDDSSKYIGKDPFPLGMIMITFASGCICVATWMLFLVVLLLPSDNHNRRNKVVHVYVLFSAIIRTVFLNETIAVIFDSQYHDDYQDASQFESFIVETAPYKICELVANILSDINWIYIVHYLQSNYGKPTWNWIPFKMKKGTHIIITVGCFLSLADNILFANLLWRKNLVVLKVFYKLIELLIYTIFISIICYFTWHNFAYILLPKTAEINTDGKCKTKLRILWENYHETIPLLAYNILIFILFYFTTIFFAAFTKHVRGWTFNFVHLLKVLITVNVWGLIGVLEKRELHISKKTVLGRKINNRDKFFANPTVNYYGEDLGKHLSAITLNRDLNTTKSNTTSHDSSSLVGSPSPTWKSPIERIRDRRRRHKIMKSENKFGQNPSFGSKSNGKPNTKTTLSKYRQLLRKPRRKTNSYEPKNGIGQNKEGSTVRPGADKHIRDSNYLATDISDNESMETELRTNHIYNYENSD.

A topological domain (extracellular) is located at residue Met1. The helical transmembrane segment at 2-22 threads the bilayer; sequence IIRLHFYYLLTLVYHLGLVGA. Over 23 to 167 the chain is Cytoplasmic; the sequence is YEKAARKRIQ…KDPFPLGMIM (145 aa). Residues 33 to 54 form a disordered region; it reads PPDLIPGPPGHKLGDERPPHYD. Residues 44-54 are compositionally biased toward basic and acidic residues; the sequence is KLGDERPPHYD. The chain crosses the membrane as a helical span at residues 168-188; that stretch reads ITFASGCICVATWMLFLVVLL. Residues 189–203 are Extracellular-facing; the sequence is LPSDNHNRRNKVVHV. Residues 204–224 form a helical membrane-spanning segment; the sequence is YVLFSAIIRTVFLNETIAVIF. The Cytoplasmic portion of the chain corresponds to 225 to 291; that stretch reads DSQYHDDYQD…IPFKMKKGTH (67 aa). The helical transmembrane segment at 292–312 threads the bilayer; the sequence is IIITVGCFLSLADNILFANLL. Residues 313-321 lie on the Extracellular side of the membrane; sequence WRKNLVVLK. A helical membrane pass occupies residues 322-342; it reads VFYKLIELLIYTIFISIICYF. Residues 343–378 lie on the Cytoplasmic side of the membrane; the sequence is TWHNFAYILLPKTAEINTDGKCKTKLRILWENYHET. A helical transmembrane segment spans residues 379 to 399; it reads IPLLAYNILIFILFYFTTIFF. Residues 400–410 are Extracellular-facing; that stretch reads AAFTKHVRGWT. Residues 411 to 431 traverse the membrane as a helical segment; sequence FNFVHLLKVLITVNVWGLIGV. Residues 432-619 lie on the Cytoplasmic side of the membrane; it reads LEKRELHISK…NHIYNYENSD (188 aa). Composition is skewed to polar residues over residues 485–504 and 526–549; these read KSNT…SPTW and KFGQ…TLSK. Disordered regions lie at residues 485 to 506 and 520 to 586; these read KSNT…TWKS and IMKS…ADKH. Over residues 552–561 the composition is skewed to basic residues; that stretch reads QLLRKPRRKT.

Its subcellular location is the membrane. In terms of biological role, involved in invasion during filamentous growth. This is Protein DFG16 (DFG16) from Saccharomyces cerevisiae (strain ATCC 204508 / S288c) (Baker's yeast).